Reading from the N-terminus, the 598-residue chain is Probable translation initiation factor IF-2 (598 aa).

Residues 8–226 (IRQPIISVLG…VTGLAQRFLE (219 aa)) enclose the tr-type G domain. Residues 17–24 (GHVDHGKT) are G1. 17 to 24 (GHVDHGKT) is a GTP binding site. The G2 stretch occupies residues 42–46 (GITQH). The G3 stretch occupies residues 81–84 (DTPG). GTP-binding positions include 81 to 85 (DTPGH) and 135 to 138 (NKVD). The interval 135 to 138 (NKVD) is G4. Residues 203 to 205 (SGV) are G5.

This sequence belongs to the TRAFAC class translation factor GTPase superfamily. Classic translation factor GTPase family. IF-2 subfamily.

Functionally, function in general translation initiation by promoting the binding of the formylmethionine-tRNA to ribosomes. Seems to function along with eIF-2. This chain is Probable translation initiation factor IF-2, found in Methanopyrus kandleri (strain AV19 / DSM 6324 / JCM 9639 / NBRC 100938).